A 335-amino-acid polypeptide reads, in one-letter code: Holliday junction branch migration complex subunit RuvB (335 aa).

The segment at 4 to 183 is large ATPase domain (RuvB-L); the sequence is ADNLNVTSII…FGIVQRLEFY (180 aa). Residues Arg23, Gly64, Lys67, Thr68, Thr69, 130-132, Arg173, Tyr183, and Arg220 each bind ATP; that span reads EDY. Thr68 serves as a coordination point for Mg(2+). Residues 184–254 are small ATPAse domain (RuvB-S); sequence PTKDLQNIIS…VAMNALNMLN (71 aa). The segment at 257–335 is head domain (RuvB-H); it reads TAGFNFMDRQ…HFSLKQSRDI (79 aa). DNA contacts are provided by Arg293, Arg312, and Arg317.

It belongs to the RuvB family. In terms of assembly, homohexamer. Forms an RuvA(8)-RuvB(12)-Holliday junction (HJ) complex. HJ DNA is sandwiched between 2 RuvA tetramers; dsDNA enters through RuvA and exits via RuvB. An RuvB hexamer assembles on each DNA strand where it exits the tetramer. Each RuvB hexamer is contacted by two RuvA subunits (via domain III) on 2 adjacent RuvB subunits; this complex drives branch migration. In the full resolvosome a probable DNA-RuvA(4)-RuvB(12)-RuvC(2) complex forms which resolves the HJ.

The protein localises to the cytoplasm. The catalysed reaction is ATP + H2O = ADP + phosphate + H(+). The RuvA-RuvB-RuvC complex processes Holliday junction (HJ) DNA during genetic recombination and DNA repair, while the RuvA-RuvB complex plays an important role in the rescue of blocked DNA replication forks via replication fork reversal (RFR). RuvA specifically binds to HJ cruciform DNA, conferring on it an open structure. The RuvB hexamer acts as an ATP-dependent pump, pulling dsDNA into and through the RuvAB complex. RuvB forms 2 homohexamers on either side of HJ DNA bound by 1 or 2 RuvA tetramers; 4 subunits per hexamer contact DNA at a time. Coordinated motions by a converter formed by DNA-disengaged RuvB subunits stimulates ATP hydrolysis and nucleotide exchange. Immobilization of the converter enables RuvB to convert the ATP-contained energy into a lever motion, pulling 2 nucleotides of DNA out of the RuvA tetramer per ATP hydrolyzed, thus driving DNA branch migration. The RuvB motors rotate together with the DNA substrate, which together with the progressing nucleotide cycle form the mechanistic basis for DNA recombination by continuous HJ branch migration. Branch migration allows RuvC to scan DNA until it finds its consensus sequence, where it cleaves and resolves cruciform DNA. The sequence is that of Holliday junction branch migration complex subunit RuvB from Baumannia cicadellinicola subsp. Homalodisca coagulata.